We begin with the raw amino-acid sequence, 170 residues long: CASP-like protein 2D1 (170 aa).

Residues 1–4 (MLKL) are Cytoplasmic-facing. Residues 5–25 (LDFSLRLSVIPLSVATIWLTV) form a helical membrane-spanning segment. The Extracellular portion of the chain corresponds to 26–47 (TNKQDNSIYGYLKYSDLTGLKY). The helical transmembrane segment at 48–68 (MVFISGICASYAFIAAVSTWI) threads the bilayer. The Cytoplasmic segment spans residues 69–83 (RCIVTKTWLFFVSDQ). Residues 84–104 (IVAYLMVTSGTAVLEILYLAY) traverse the membrane as a helical segment. The Extracellular portion of the chain corresponds to 105 to 127 (NGDREVSWSEACTSYGKFCYRMK). Residues 128 to 148 (LAVILHALALSCFIILAVISA) traverse the membrane as a helical segment. The Cytoplasmic portion of the chain corresponds to 149–170 (YRAFSIFEPPLVPSKVVEEDRA).

The protein belongs to the Casparian strip membrane proteins (CASP) family. In terms of assembly, homodimer and heterodimers.

It is found in the cell membrane. The chain is CASP-like protein 2D1 from Populus trichocarpa (Western balsam poplar).